The sequence spans 215 residues: Leucyl/phenylalanyl-tRNA--protein transferase (215 aa).

The protein belongs to the L/F-transferase family.

It is found in the cytoplasm. The catalysed reaction is N-terminal L-lysyl-[protein] + L-leucyl-tRNA(Leu) = N-terminal L-leucyl-L-lysyl-[protein] + tRNA(Leu) + H(+). It catalyses the reaction N-terminal L-arginyl-[protein] + L-leucyl-tRNA(Leu) = N-terminal L-leucyl-L-arginyl-[protein] + tRNA(Leu) + H(+). The enzyme catalyses L-phenylalanyl-tRNA(Phe) + an N-terminal L-alpha-aminoacyl-[protein] = an N-terminal L-phenylalanyl-L-alpha-aminoacyl-[protein] + tRNA(Phe). Functionally, functions in the N-end rule pathway of protein degradation where it conjugates Leu, Phe and, less efficiently, Met from aminoacyl-tRNAs to the N-termini of proteins containing an N-terminal arginine or lysine. This Campylobacter jejuni subsp. jejuni serotype O:2 (strain ATCC 700819 / NCTC 11168) protein is Leucyl/phenylalanyl-tRNA--protein transferase.